The primary structure comprises 141 residues: Protein X (141 aa).

Residues 24–52 (QSSGPPFPRPAAGSAASSTSSPSPSDESD) form a disordered region. Positions 33 to 48 (PAAGSAASSTSSPSPS) are enriched in low complexity. Positions 68–113 (PCCLVFTCADLRTMDSTVNFVSWHAKRQLGMPSKDLWTPYIKDQLL) are mitochondrial targeting sequence.

The protein belongs to the orthohepadnavirus protein X family. In terms of assembly, may form homodimer. May interact with host CEBPA, CFLAR, CREB1, DDB1, E4F1, HBXIP, HSPD1/HSP60, NFKBIA, POLR2E and SMAD4. Interacts with host SMC5-SMC6 complex and induces its degradation. Interacts with host TRPC4AP; leading to prevent ubiquitination of TRPC4AP. Interacts with host PLSCR1; this interaction promotes ubiquitination and degradation of HBx and impairs HBx-mediated cell proliferation. In terms of processing, a fraction may be phosphorylated in insect cells and HepG2 cells, a human hepatoblastoma cell line. Phosphorylated in vitro by host protein kinase C or mitogen-activated protein kinase. N-acetylated in insect cells.

The protein localises to the host cytoplasm. Its subcellular location is the host nucleus. It localises to the host mitochondrion. Functionally, multifunctional protein that plays a role in silencing host antiviral defenses and promoting viral transcription. Does not seem to be essential for HBV infection. May be directly involved in development of cirrhosis and liver cancer (hepatocellular carcinoma). Most of cytosolic activities involve modulation of cytosolic calcium. The effect on apoptosis is controversial depending on the cell types in which the studies have been conducted. May induce apoptosis by localizing in mitochondria and causing loss of mitochondrial membrane potential. May also modulate apoptosis by binding host CFLAR, a key regulator of the death-inducing signaling complex (DISC). Promotes viral transcription by using the host E3 ubiquitin ligase DDB1 to target the SMC5-SMC6 complex to proteasomal degradation. This host complex would otherwise bind to viral episomal DNA, and prevents its transcription. Moderately stimulates transcription of many different viral and cellular transcription elements. Promoters and enhancers stimulated by HBx contain DNA binding sites for NF-kappa-B, AP-1, AP-2, c-EBP, ATF/CREB, or the calcium-activated factor NF-AT. In Marmota monax (Woodchuck), this protein is Protein X.